The sequence spans 132 residues: Transmembrane protein 170B (132 aa).

At 1 to 37 (MRAEGADHSMINLSVQQVLSLWAHGTVLRNLTEMWYW) the chain is on the extracellular side. A glycan (N-linked (GlcNAc...) asparagine) is linked at Asn12. A helical membrane pass occupies residues 38–58 (IFLWALFSSLFVHGAAGVLMF). The Cytoplasmic portion of the chain corresponds to 59-68 (VMLQRHRQGR). Residues 69 to 89 (VISIIAVSIGFLASVTGAMIT) form a helical membrane-spanning segment. At 90 to 104 (SAAVAGIYRVAGKNM) the chain is on the extracellular side. A helical membrane pass occupies residues 105–125 (APLEALVWGVGQTVLTLIISF). Topologically, residues 126–132 (SRILATL) are cytoplasmic.

Belongs to the TMEM170 family. As to quaternary structure, interacts with CTNNB1.

Its subcellular location is the cell membrane. The sequence is that of Transmembrane protein 170B from Mus musculus (Mouse).